The primary structure comprises 233 residues: LexA repressor (233 aa).

The H-T-H motif DNA-binding region spans 26 to 46 (FEEMKEALDLKSKSGVHRLIS). Active-site for autocatalytic cleavage activity residues include serine 153 and lysine 191.

Belongs to the peptidase S24 family. In terms of assembly, homodimer.

The catalysed reaction is Hydrolysis of Ala-|-Gly bond in repressor LexA.. Functionally, represses a number of genes involved in the response to DNA damage (SOS response), including recA and lexA. In the presence of single-stranded DNA, RecA interacts with LexA causing an autocatalytic cleavage which disrupts the DNA-binding part of LexA, leading to derepression of the SOS regulon and eventually DNA repair. This is LexA repressor from Erythrobacter litoralis (strain HTCC2594).